Consider the following 261-residue polypeptide: Pantothenate synthetase (261 aa).

ATP is bound at residue 29 to 36 (MGALHNGH). The active-site Proton donor is the His-36. Gln-60 is a (R)-pantoate binding site. Beta-alanine is bound at residue Gln-60. 147-150 (GEKD) serves as a coordination point for ATP. (R)-pantoate is bound at residue Gln-153. 184–187 (LSSR) is an ATP binding site.

It belongs to the pantothenate synthetase family. Homodimer.

It localises to the cytoplasm. It catalyses the reaction (R)-pantoate + beta-alanine + ATP = (R)-pantothenate + AMP + diphosphate + H(+). It participates in cofactor biosynthesis; (R)-pantothenate biosynthesis; (R)-pantothenate from (R)-pantoate and beta-alanine: step 1/1. In terms of biological role, catalyzes the condensation of pantoate with beta-alanine in an ATP-dependent reaction via a pantoyl-adenylate intermediate. In Francisella philomiragia subsp. philomiragia (strain ATCC 25017 / CCUG 19701 / FSC 153 / O#319-036), this protein is Pantothenate synthetase.